The chain runs to 213 residues: Phosphoribosyl-dephospho-CoA transferase (213 aa).

Residues Asp135 and Asp137 contribute to the active site.

This sequence belongs to the MdcG family.

The enzyme catalyses apo-[malonate decarboxylase ACP] + 2'-(5''-triphospho-alpha-D-ribosyl)-3'-dephospho-CoA = holo-[malonate decarboxylase ACP] + diphosphate. Transfers 2'-(5-triphosphoribosyl)-3'-dephosphocoenzyme-A to the apo-[acyl-carrier-protein] of the malonate decarboxylase to yield holo-[acyl-carrier-protein]. The polypeptide is Phosphoribosyl-dephospho-CoA transferase (Xanthomonas axonopodis pv. citri (strain 306)).